The following is a 444-amino-acid chain: MGNSLRCISQEQDPNQKKPSSVVNGNSSEKHVRRLSLIPSFRRRTLLPSLSCSGSSTSSTSKKGGIKTKKKIRERHHQEQHHHDHEKDSLIQDQTLAATNILFSQTPRNSNSAPPFRRSTSVVYTQPPTAAVAASVGSVSGALTPKKSTYGYVRSSSNRQRSSTDPVLKPNQLLDKELKVEGAETKRFVLVHGGGFGAWCWYKTITLLEKHGFQVDAVDLTGSGVSSFDTNNITSLAQYVKPLLHFFDTLKPTEKVILVGHDFGGACMSYAMEMYPSKIAKAIFISAAMLANAQSTLDLFNQQPDSNYDLMEQVHLFLYANGKKNPPTAVDFDRSLLRDFFFNQSPPKDVALASVSMRPIPFAPVVEKLHVSEKNYGSIRRFYIKTMEDDYAVPVSLQDAMIKSNPPEQVFHLKGSDHAPFFSRPQSLNRILVEISQLPPKKSS.

Residues 1–27 (MGNSLRCISQEQDPNQKKPSSVVNGNS) are compositionally biased toward polar residues. 2 disordered regions span residues 1–36 (MGNS…RRLS) and 48–91 (PSLS…DSLI). The N-terminal 58 residues, 1–58 (MGNSLRCISQEQDPNQKKPSSVVNGNSSEKHVRRLSLIPSFRRRTLLPSLSCSGSSTS), are a transit peptide targeting the chloroplast. Positions 53–63 (SGSSTSSTSKK) are enriched in low complexity. Over residues 64–80 (GGIKTKKKIRERHHQEQ) the composition is skewed to basic residues. The segment covering 81 to 90 (HHHDHEKDSL) has biased composition (basic and acidic residues). Residues 188-312 (FVLVHGGGFG…QPDSNYDLME (125 aa)) enclose the AB hydrolase-1 domain. The Acyl-ester intermediate role is filled by aspartate 262. Residues aspartate 390 and histidine 418 each act as charge relay system in the active site.

This sequence belongs to the AB hydrolase superfamily. Methylesterase family.

The protein resides in the plastid. Its subcellular location is the chloroplast. Putative methylesterase. The protein is Putative methylesterase 15, chloroplastic of Arabidopsis thaliana (Mouse-ear cress).